The sequence spans 37 residues: Large ribosomal subunit protein bL36 (37 aa).

The protein belongs to the bacterial ribosomal protein bL36 family.

In Mycobacterium tuberculosis (strain ATCC 25618 / H37Rv), this protein is Large ribosomal subunit protein bL36 (rpmJ).